The primary structure comprises 66 residues: uncharacterized protein (66 aa).

Helical transmembrane passes span 5 to 25 (ALIV…PLVN) and 30 to 50 (IMFG…VTPL).

It localises to the cell membrane. This is an uncharacterized protein from Bacillus subtilis (strain 168).